A 423-amino-acid chain; its full sequence is UPF0229 protein PFLU_5583 (423 aa).

The tract at residues 64–109 (LHHGRGGKQTVVHPGNKEFTTGEHIQRPQGGGGGKGPGKAGNSGEG) is disordered. Gly residues predominate over residues 92–107 (QGGGGGKGPGKAGNSG).

The protein belongs to the UPF0229 family.

This Pseudomonas fluorescens (strain SBW25) protein is UPF0229 protein PFLU_5583.